Consider the following 155-residue polypeptide: Small ribosomal subunit protein uS7c (155 aa).

This sequence belongs to the universal ribosomal protein uS7 family. In terms of assembly, part of the 30S ribosomal subunit.

The protein resides in the plastid. Its subcellular location is the chloroplast. In terms of biological role, one of the primary rRNA binding proteins, it binds directly to 16S rRNA where it nucleates assembly of the head domain of the 30S subunit. The protein is Small ribosomal subunit protein uS7c (rps7) of Marchantia polymorpha (Common liverwort).